A 299-amino-acid polypeptide reads, in one-letter code: MSDLPDTDFTQRFIFDERDVRGEWVSLDDSYAAVLARHEYPQPVKVLLGELMAATALLVGAMKFDGLLILQARSAGPIPLLMVECSSEREIRGMARYEADQISADATLSQLMPDGHLTLTIDPVKGQRYQGTVDLDGANLSECFTNYFVQSQQLNTRFWLNAAGGKARGLLLQQLPRDRQPDDEEREDSWQHVVALAKTLKPEEWTEGNETLLHRLYHEDAVRLFDIQPLRFNCSCSRERSGNALVSLGEHDAKALVDECGGTVEIDCQFCNERYFFDASDVAQLFAGGGTDVASETRH.

2 disulfides stabilise this stretch: Cys234–Cys236 and Cys268–Cys271.

It belongs to the HSP33 family. Under oxidizing conditions two disulfide bonds are formed involving the reactive cysteines. Under reducing conditions zinc is bound to the reactive cysteines and the protein is inactive.

Its subcellular location is the cytoplasm. Its function is as follows. Redox regulated molecular chaperone. Protects both thermally unfolding and oxidatively damaged proteins from irreversible aggregation. Plays an important role in the bacterial defense system toward oxidative stress. This is 33 kDa chaperonin from Pseudomonas putida (strain ATCC 700007 / DSM 6899 / JCM 31910 / BCRC 17059 / LMG 24140 / F1).